A 340-amino-acid chain; its full sequence is Thermopsin (340 aa).

The first 28 residues, 1–28, serve as a signal peptide directing secretion; sequence MNFKSICLIILLSALIIPYIPQNIYFFP. Positions 29-41 are excised as a propeptide; the sequence is HRNTTGATISSGL. Asn-31, Asn-65, Asn-85, Asn-117, Asn-148, Asn-197, Asn-277, Asn-287, Asn-327, and Asn-334 each carry an N-linked (GlcNAc...) asparagine glycan.

It belongs to the peptidase A5 family.

It localises to the secreted. It carries out the reaction Specificity similar to pepsin A, prefers bulky hydrophobic side-chains on either side of the scissible bond.. Functionally, may represent a new class of acid proteases. It digests proteins and peptides in acidic solution. The chain is Thermopsin (thpS) from Sulfolobus acidocaldarius (strain ATCC 33909 / DSM 639 / JCM 8929 / NBRC 15157 / NCIMB 11770).